A 152-amino-acid polypeptide reads, in one-letter code: Cornifin-A (152 aa).

The segment at Glu20–Pro40 is disordered. 14 tandem repeats follow at residues Pro27–Ala34, Pro35–His42, Pro43–Asn49, Pro50–Gln57, Pro58–Gln65, Pro66–Gln73, Pro74–Gln81, Pro82–Gln89, Pro90–Gln97, Pro98–His105, Pro106–His113, Pro114–Gln121, Pro122–Gln129, and Pro130–Pro137. The interval Pro27–Pro137 is 14 X 8 AA approximate tandem repeats.

It belongs to the cornifin (SPRR) family. As to expression, in squamous epithelia lining the nasal vestibule and in the hard palate.

It is found in the cytoplasm. Functionally, cross-linked envelope protein of keratinocytes. It is a keratinocyte protein that first appears in the cell cytosol, but ultimately becomes cross-linked to membrane proteins by transglutaminase. All that results in the formation of an insoluble envelope beneath the plasma membrane. This is Cornifin-A (Sprr1a) from Rattus norvegicus (Rat).